Consider the following 309-residue polypeptide: Ribosomal RNA small subunit methyltransferase H (309 aa).

Residues 33–35 (GGH), Asp53, Phe79, Asp100, and Gln107 contribute to the S-adenosyl-L-methionine site.

Belongs to the methyltransferase superfamily. RsmH family.

The protein localises to the cytoplasm. The enzyme catalyses cytidine(1402) in 16S rRNA + S-adenosyl-L-methionine = N(4)-methylcytidine(1402) in 16S rRNA + S-adenosyl-L-homocysteine + H(+). Its function is as follows. Specifically methylates the N4 position of cytidine in position 1402 (C1402) of 16S rRNA. This Clostridium kluyveri (strain NBRC 12016) protein is Ribosomal RNA small subunit methyltransferase H.